Here is a 281-residue protein sequence, read N- to C-terminus: NADPH-dependent 7-cyano-7-deazaguanine reductase (281 aa).

87–89 is a substrate binding site; it reads IES. 89–90 provides a ligand contact to NADPH; the sequence is SK. Cysteine 188 acts as the Thioimide intermediate in catalysis. Aspartate 195 functions as the Proton donor in the catalytic mechanism. Position 227–228 (227–228) interacts with substrate; the sequence is HE. 256–257 serves as a coordination point for NADPH; the sequence is RG. The interval 261 to 281 is disordered; it reads INPYRSTEQDKPAHNHRMARQ.

This sequence belongs to the GTP cyclohydrolase I family. QueF type 2 subfamily. Homodimer.

It is found in the cytoplasm. The catalysed reaction is 7-aminomethyl-7-carbaguanine + 2 NADP(+) = 7-cyano-7-deazaguanine + 2 NADPH + 3 H(+). It functions in the pathway tRNA modification; tRNA-queuosine biosynthesis. Its function is as follows. Catalyzes the NADPH-dependent reduction of 7-cyano-7-deazaguanine (preQ0) to 7-aminomethyl-7-deazaguanine (preQ1). This Vibrio parahaemolyticus serotype O3:K6 (strain RIMD 2210633) protein is NADPH-dependent 7-cyano-7-deazaguanine reductase.